The primary structure comprises 282 residues: MHFFHLYERYKHRINQKLFYTLNQLPFQKSSLLKAMKYSVFSGSKRLRSSLIYSTGDVFKVNITTLDVISTAIEFIHSYSLIHDDLPCMDNDNFRRGKISCHVKYGESTSLLAGDALQSLAFNILSNSFMPNVSNLKRIKMISELSYSIGSSGMCMGQNLDLEAEKKDVNLSELEIINLYKTSFLMRSAVRLVYFSSNNFSKSILSILDLFSISIGLAFQIQDDILDFKKDSVKTDNKKIIKKHTYPLIIGLDESRKKIKQLHKKSFLALNSLKKKISIPTY.

Positions 45, 48, and 77 each coordinate isopentenyl diphosphate. Residues aspartate 84 and aspartate 90 each contribute to the Mg(2+) site. Arginine 95 serves as a coordination point for (2E)-geranyl diphosphate. Arginine 96 contributes to the isopentenyl diphosphate binding site. Lysine 181, threonine 182, and glutamine 220 together coordinate (2E)-geranyl diphosphate.

Belongs to the FPP/GGPP synthase family. The cofactor is Mg(2+).

It is found in the cytoplasm. It carries out the reaction isopentenyl diphosphate + (2E)-geranyl diphosphate = (2E,6E)-farnesyl diphosphate + diphosphate. This chain is Farnesyl diphosphate synthase (ispA), found in Buchnera aphidicola subsp. Acyrthosiphon pisum (strain APS) (Acyrthosiphon pisum symbiotic bacterium).